We begin with the raw amino-acid sequence, 799 residues long: Target of rapamycin complex 1 subunit TCO89 (799 aa).

Residues 18-41 (NASTVSHQSKPFRQFSTRSRAKSN) are disordered. 2 positions are modified to phosphothreonine: threonine 52 and threonine 82. Serine 84, serine 104, serine 107, serine 115, and serine 144 each carry phosphoserine. Positions 97–126 (NQGKRSASFHSPVHNTLLSPKNSSHSNTGT) are enriched in polar residues. Disordered stretches follow at residues 97–171 (NQGK…DNIE) and 201–284 (LQSP…ADID). Over residues 147–156 (DAQESKKSES) the composition is skewed to basic and acidic residues. A compositionally biased stretch (acidic residues) spans 157–170 (TTDEEVECFSEDNI). Phosphoserine is present on residues serine 203 and serine 215. A compositionally biased stretch (basic and acidic residues) spans 213–224 (DKSGTDGKENHR). The segment covering 233–243 (LSSNNYFGESS) has biased composition (polar residues). Residues 244-253 (HSIEHQKDGE) show a composition bias toward basic and acidic residues. The segment covering 254 to 269 (TSPSSIETKLNATSVI) has biased composition (polar residues). Position 290 is a phosphoserine (serine 290). The disordered stretch occupies residues 324-391 (AHKSNQKPSH…PDDISSAGTK (68 aa)). Over residues 332 to 346 (SHSDEQFDQEDHIDA) the composition is skewed to basic and acidic residues. Residues 348–363 (RSNSSRKSDSSFMSLR) are compositionally biased toward low complexity. Residue serine 397 is modified to Phosphoserine. Disordered regions lie at residues 418–476 (FENS…QSTF) and 538–568 (NKNSAAPASPLSNEHITSSTNSGSDANRQSN). 2 stretches are compositionally biased toward polar residues: residues 420–429 (NSSSIQNSLG) and 461–476 (GRSQLGQNIPNSQSTF). Phosphoserine is present on serine 575. The disordered stretch occupies residues 663–685 (IRKKSHNDAQSIAHSSSDTDHKD). Serine 707 carries the post-translational modification Phosphoserine.

It belongs to the TORC subunit TCO89 family. In terms of assembly, the target of rapamycin complex 1 (TORC1) is composed of at least KOG1, LST8, TCO89 and either TOR1 (TORC1-A) or TOR2 (TORC1-B). Interacts with PIB2; following activation of PIB2 by glutamine or cysteine. TORC1 binds to and is inhibited by FKBP-rapamycin.

It is found in the cell membrane. The protein resides in the vacuole membrane. In terms of biological role, component of TORC1, which regulates multiple cellular processes to control cell growth in response to environmental signals. Nutrient limitation and environmental stress signals cause inactivation of TORC1. Active TORC1 positively controls ribosome biogenesis via control of rRNA, ribosomal protein and tRNA gene expression, and rRNA processing. TORC1 positively controls protein biosynthesis by regulation of mRNA stability, translation initiation factor activity, and high-affinity amino acid permeases that serve to provide amino acids for use by the translation machinery. TORC1 also promotes growth by sequestering a number of nutrient and general stress-responsive transcription factors in the cytoplasm. TORC1 negatively controls macroautophagy, a process to recycle surplus cytoplasmic mass under nutrient starvation conditions. The polypeptide is Target of rapamycin complex 1 subunit TCO89 (TCO89) (Saccharomyces cerevisiae (strain ATCC 204508 / S288c) (Baker's yeast)).